Reading from the N-terminus, the 862-residue chain is Rab GTPase-binding effector protein 1 (862 aa).

Position 2 is an N-acetylalanine (A2). The stretch at 11-345 (DVSLQQRVAE…KKTDTEEEVK (335 aa)) forms a coiled coil. K282 carries the N6-acetyllysine modification. Residues 315-374 (ELKKKDQEEDEQQRVNKRKDNKKTDTEEEVKIPVVCALTQEESSTPLSNEEEHLDSTHGS) are disordered. A compositionally biased stretch (basic and acidic residues) spans 336-345 (KKTDTEEEVK). A phosphoserine mark is found at S374, S377, and S407. The residue at position 408 (T408) is a Phosphothreonine. S410 is modified (phosphoserine). Residues 534–816 (DMCSNYEKQL…LQTELDVSEQ (283 aa)) adopt a coiled-coil conformation.

Belongs to the rabaptin family. Heterodimer with RABGEF1. The heterodimer binds RAB4A and RAB5A that have been activated by GTP-binding. Interacts with TSC2. Interacts with GGA1 (via GAE domain), GGA2 (via GAE domain) and GGA3 (via GAE domain). Interacts with AP1G1 (via GAE domain). Interacts with AP1G2 (via GAE domain). Interacts with ECPAS. Interacts with KCNH1. Interacts with PKD1 (via C-terminal domain) and GGA1; the interactions recruit PKD1:PKD2 complex to GGA1 and ARL3 at trans-Golgi network. Interacts with KCNH1. Post-translationally, proteolytic cleavage by caspases in apoptotic cells causes loss of endosome fusion activity.

Its subcellular location is the cytoplasm. It is found in the early endosome. It localises to the recycling endosome. The protein resides in the cytoplasmic vesicle. Rab effector protein acting as linker between gamma-adaptin, RAB4A and RAB5A. Involved in endocytic membrane fusion and membrane trafficking of recycling endosomes. Involved in KCNH1 channels trafficking to and from the cell membrane. Stimulates RABGEF1 mediated nucleotide exchange on RAB5A. Mediates the traffic of PKD1:PKD2 complex from the endoplasmic reticulum through the Golgi to the cilium. The protein is Rab GTPase-binding effector protein 1 (Rabep1) of Mus musculus (Mouse).